The primary structure comprises 637 residues: MASIEEIAHQIIEQQMGEISRSQTEVSQTALMDGTTQRIQLVPSESNVSVPQRIQIVTDPQTGQKIQIVTALDQSGVSKQFILTNNDGSLPSKVILARQDSNQGKVFLTTPDAAGMNQLFFSSPDVPAQHIQILSDTQSLDQNLNKQLVELCVVCGDKASGRHYGAVTCEGCKGFFKRSIRKNLVYTCRGSKDCVINKHYRNRCQYCRLQRCMSLGMKQDSVQCERKPIEVSREKSSNCAASTEKIYIRKDLRSPLAATTTFVTENKTPRTTSLLDSSMLVNIQQSGVKNESILITPNKVEACQGDLSTLANVVTSLANLNKTNDLPQTNTELSIIESLSNGDSSLSDLAQDDQSSSEVTRAFDTLAKALNQSENSTQGSSECLGSNANLLHDVNVEIEGPLLNDVHIAFRLTMPSPMPEYLNVHYICESASRLLFLSMHWARSIPSFQSLGQENSISLVKACWNELFSLGLAQCSQVMNVETILAAFVNHLQNSMQHDKLSSDKVKLVTDHIFKLQEFCNSMVKLCVDGYEYAYLKAIALFSPDHPGLENVSHIEKLQEKAYMEFQDYVTKTYPEDTYRLSRLLLRLPALRLMNAAITEELFFAGLIGNVQIDSIIPYILRMETSDYNSQIIGLAV.

The segment at residues 149–224 (VELCVVCGDK…LGMKQDSVQC (76 aa)) is a DNA-binding region (nuclear receptor). NR C4-type zinc fingers lie at residues 152–172 (CVVCGDKASGRHYGAVTCEGC) and 188–207 (CRGSKDCVINKHYRNRCQYC). Positions 383 to 624 (CLGSNANLLH…SIIPYILRME (242 aa)) constitute an NR LBD domain.

It belongs to the nuclear hormone receptor family. NR2 subfamily.

It is found in the nucleus. Functionally, orphan nuclear receptor. Binds the IR7 element in the promoter of its own gene in an autoregulatory negative feedback mechanism. Primarily repressor of a broad range of genes. Binds to hormone response elements (HREs) consisting of two 5'-AGGTCA-3' half site direct repeat consensus sequences. This is Nuclear receptor subfamily 2 group C member 1-A (nr2c1-a) from Xenopus laevis (African clawed frog).